The chain runs to 288 residues: Diaminopimelate epimerase (288 aa).

Substrate is bound by residues Asn13, Gln46, and Asn66. The active-site Proton donor is Cys75. Residues 76–77, Asn166, Asn199, and 217–218 each bind substrate; these read GN and ER. Cys226 functions as the Proton acceptor in the catalytic mechanism. 227–228 is a substrate binding site; sequence GT.

This sequence belongs to the diaminopimelate epimerase family. As to quaternary structure, homodimer.

It is found in the cytoplasm. It catalyses the reaction (2S,6S)-2,6-diaminopimelate = meso-2,6-diaminopimelate. The protein operates within amino-acid biosynthesis; L-lysine biosynthesis via DAP pathway; DL-2,6-diaminopimelate from LL-2,6-diaminopimelate: step 1/1. Functionally, catalyzes the stereoinversion of LL-2,6-diaminopimelate (L,L-DAP) to meso-diaminopimelate (meso-DAP), a precursor of L-lysine and an essential component of the bacterial peptidoglycan. This chain is Diaminopimelate epimerase, found in Cupriavidus taiwanensis (strain DSM 17343 / BCRC 17206 / CCUG 44338 / CIP 107171 / LMG 19424 / R1) (Ralstonia taiwanensis (strain LMG 19424)).